A 66-amino-acid chain; its full sequence is Large ribosomal subunit protein bL35 (66 aa).

The segment at 25-45 is disordered; it reads QAAGKRHGMSKRPQKMKRNAR. The segment covering 28 to 44 has biased composition (basic residues); sequence GKRHGMSKRPQKMKRNA.

It belongs to the bacterial ribosomal protein bL35 family.

The protein is Large ribosomal subunit protein bL35 of Rhodospirillum centenum (strain ATCC 51521 / SW).